The following is a 286-amino-acid chain: Translocon-associated protein subunit alpha (286 aa).

The first 21 residues, 1–21, serve as a signal peptide directing secretion; the sequence is MRLLPRLLLLLLLVFPATVLL. Topologically, residues 22-207 are lumenal; that stretch reads RGGPGGSLAE…EREDGLDGQT (186 aa). The segment at 28-83 is disordered; it reads SLAEAQDLSEDEETVEDSVIEDEDDEAEVEEDEPTDLAEDREEEDVSGEPEASPSA. A compositionally biased stretch (acidic residues) spans 34-75; sequence DLSEDEETVEDSVIEDEDDEAEVEEDEPTDLAEDREEEDVSG. N136 and N191 each carry an N-linked (GlcNAc...) asparagine glycan. A helical transmembrane segment spans residues 208 to 228; it reads IFMYMSLAGLGLLVVVGLHQL. The Cytoplasmic portion of the chain corresponds to 229 to 286; it reads LESRNRKRPIQKVEMGTSSQNDVDMSWIPQETLNQINKASPRRLPRKRPQKRSVGSDE. S247 carries the post-translational modification Phosphoserine. T260 bears the Phosphothreonine mark. The interval 264–286 is disordered; that stretch reads INKASPRRLPRKRPQKRSVGSDE. The residue at position 268 (S268) is a Phosphoserine. Basic residues predominate over residues 268-279; sequence SPRRLPRKRPQK.

Belongs to the TRAP-alpha family. Heterotetramer of TRAP-alpha, TRAP-beta, TRAP-delta and TRAP-gamma. Interacts with palmitoylated calnexin (CALX), the interaction is required for efficient folding of glycosylated proteins. In terms of processing, phosphorylated in its cytoplasmic tail.

It localises to the endoplasmic reticulum membrane. Its function is as follows. TRAP proteins are part of a complex whose function is to bind calcium to the ER membrane and thereby regulate the retention of ER resident proteins. May be involved in the recycling of the translocation apparatus after completion of the translocation process or may function as a membrane-bound chaperone facilitating folding of translocated proteins. In Oryctolagus cuniculus (Rabbit), this protein is Translocon-associated protein subunit alpha (SSR1).